The primary structure comprises 201 residues: MBF complex negative regulatory component yox1 (201 aa).

The span at 1 to 22 (MSLSDSPSKSGNTGKDLISNNE) shows a compositional bias: polar residues. The tract at residues 1–42 (MSLSDSPSKSGNTGKDLISNNEAKNHEDEETHQKKRRRRTTD) is disordered. Basic and acidic residues predominate over residues 23 to 32 (AKNHEDEETH). Positions 33-92 (QKKRRRRTTDAEATLLEQYFLKTPKPSLIERQELSKKLKSSMTPRELQIWFQNKRQSLRR) form a DNA-binding region, homeobox.

Component of the MBF transcription factor complex. Post-translationally, phosphorylated in response to hydroxyurea. Phosphorylation inhibits the repressor activity and is dependent on rad3. However, the regulation of yox1 by rad3 is probably indirect.

Its subcellular location is the nucleus. In terms of biological role, negative regulatory component of the MBF transcription factor complex involved in cell-cycle G1/S phase-specific gene expression and more particularly DNA replication checkpoint-dependent gene expression. The chain is MBF complex negative regulatory component yox1 (yox1) from Schizosaccharomyces pombe (strain 972 / ATCC 24843) (Fission yeast).